The chain runs to 184 residues: MDSFELNKILGAVLGTCLILLVTSFTANALFSPKMPEKPGFEIAVKEDAGHGKEGGAAAAASEPIEKLLQTASVEKGAAAAKKCGACHTFEKGGPNRVGPNLYGVVGEARGEGRNGFNFSAAMKGKGGTWTFDDLNKFIANPKGFIPGTAMGFAGIPKDSERADVIAYLNSLSEHPKPLPTASK.

Topologically, residues 1–10 are cytoplasmic; that stretch reads MDSFELNKIL. The helical; Signal-anchor transmembrane segment at 11–31 threads the bilayer; that stretch reads GAVLGTCLILLVTSFTANALF. The Periplasmic portion of the chain corresponds to 32 to 184; the sequence is SPKMPEKPGF…HPKPLPTASK (153 aa). Positions 84, 87, 88, and 151 each coordinate heme c.

This sequence belongs to the cytochrome c family. Binds 1 heme c group covalently per subunit.

It is found in the cell membrane. May be involved in electron transfer from bc1 complex to aa3. This Bradyrhizobium diazoefficiens (strain JCM 10833 / BCRC 13528 / IAM 13628 / NBRC 14792 / USDA 110) protein is Cytochrome c homolog (cycM).